The following is a 446-amino-acid chain: N-succinylarginine dihydrolase (446 aa).

Substrate-binding positions include 19–28 (AGLSFGNEAS), Asn110, and 137–138 (HR). Glu174 is an active-site residue. Arg213 is a binding site for substrate. His249 is an active-site residue. Asp251 and Asn364 together coordinate substrate. Catalysis depends on Cys370, which acts as the Nucleophile.

The protein belongs to the succinylarginine dihydrolase family. In terms of assembly, homodimer.

The enzyme catalyses N(2)-succinyl-L-arginine + 2 H2O + 2 H(+) = N(2)-succinyl-L-ornithine + 2 NH4(+) + CO2. The protein operates within amino-acid degradation; L-arginine degradation via AST pathway; L-glutamate and succinate from L-arginine: step 2/5. Functionally, catalyzes the hydrolysis of N(2)-succinylarginine into N(2)-succinylornithine, ammonia and CO(2). The polypeptide is N-succinylarginine dihydrolase (Serratia proteamaculans (strain 568)).